Consider the following 420-residue polypeptide: Phospholipase A1-II 3 (420 aa).

The N-terminal stretch at 1–21 (MCCFLLVSVLLATTLTDVASA) is a signal peptide. An N-linked (GlcNAc...) asparagine glycan is attached at Asn-231. Residue Ser-240 is the Acyl-ester intermediate of the active site. Ser-240 acts as the Charge relay system in catalysis. Asn-294 carries an N-linked (GlcNAc...) asparagine glycan. Active-site charge relay system residues include Asp-305 and His-343. The stretch at 367-388 (VVDRDLALVNKEVDALRDEYQV) forms a coiled coil. A glycan (N-linked (GlcNAc...) asparagine) is linked at Asn-403.

It belongs to the AB hydrolase superfamily. Lipase family.

The protein localises to the secreted. Functionally, acylhydrolase that catalyzes the hydrolysis of phospholipids at the sn-1 position. The polypeptide is Phospholipase A1-II 3 (Oryza sativa subsp. indica (Rice)).